Here is a 162-residue protein sequence, read N- to C-terminus: Putative 4-hydroxy-4-methyl-2-oxoglutarate aldolase (162 aa).

Substrate-binding positions include G75 to L78 and R97. Position 98 (D98) interacts with a divalent metal cation.

It belongs to the class II aldolase/RraA-like family. Homotrimer. The cofactor is a divalent metal cation.

The catalysed reaction is 4-hydroxy-4-methyl-2-oxoglutarate = 2 pyruvate. It carries out the reaction oxaloacetate + H(+) = pyruvate + CO2. Catalyzes the aldol cleavage of 4-hydroxy-4-methyl-2-oxoglutarate (HMG) into 2 molecules of pyruvate. Also contains a secondary oxaloacetate (OAA) decarboxylase activity due to the common pyruvate enolate transition state formed following C-C bond cleavage in the retro-aldol and decarboxylation reactions. In Ectopseudomonas mendocina (strain ymp) (Pseudomonas mendocina), this protein is Putative 4-hydroxy-4-methyl-2-oxoglutarate aldolase.